A 201-amino-acid chain; its full sequence is Large ribosomal subunit protein eL15A (201 aa).

The interval 161–182 (SRGLTSIGKKSRGIGKGHRFNN) is disordered. Positions 169-179 (KKSRGIGKGHR) are enriched in basic residues.

This sequence belongs to the eukaryotic ribosomal protein eL15 family. In terms of assembly, component of the large ribosomal subunit (LSU). Mature yeast ribosomes consist of a small (40S) and a large (60S) subunit. The 40S small subunit contains 1 molecule of ribosomal RNA (18S rRNA) and at least 33 different proteins. The large 60S subunit contains 3 rRNA molecules (25S, 5.8S and 5S rRNA) and at least 46 different proteins.

Its subcellular location is the cytoplasm. The protein localises to the nucleus. The protein resides in the nucleolus. Functionally, component of the ribosome, a large ribonucleoprotein complex responsible for the synthesis of proteins in the cell. The small ribosomal subunit (SSU) binds messenger RNAs (mRNAs) and translates the encoded message by selecting cognate aminoacyl-transfer RNA (tRNA) molecules. The large subunit (LSU) contains the ribosomal catalytic site termed the peptidyl transferase center (PTC), which catalyzes the formation of peptide bonds, thereby polymerizing the amino acids delivered by tRNAs into a polypeptide chain. The nascent polypeptides leave the ribosome through a tunnel in the LSU and interact with protein factors that function in enzymatic processing, targeting, and the membrane insertion of nascent chains at the exit of the ribosomal tunnel. The polypeptide is Large ribosomal subunit protein eL15A (rpl15) (Schizosaccharomyces pombe (strain 972 / ATCC 24843) (Fission yeast)).